The chain runs to 420 residues: Glutamate dehydrogenase (420 aa).

The active site involves Lys-105. 220-226 (GYGNAGY) contributes to the NAD(+) binding site.

The protein belongs to the Glu/Leu/Phe/Val dehydrogenases family. In terms of assembly, homohexamer.

The protein localises to the cytoplasm. It catalyses the reaction L-glutamate + NAD(+) + H2O = 2-oxoglutarate + NH4(+) + NADH + H(+). It carries out the reaction L-glutamate + NADP(+) + H2O = 2-oxoglutarate + NH4(+) + NADPH + H(+). The protein is Glutamate dehydrogenase (gdhA) of Pyrococcus abyssi (strain GE5 / Orsay).